The chain runs to 286 residues: Centromere protein P (286 aa).

Residues 1–73 are a coiled coil; that stretch reads MDSETRELRA…RSEHSFLSKL (73 aa). S38 is modified (phosphoserine).

The protein belongs to the CENP-P/CTF19 family. Component of the CENPA-CAD complex, composed of CENPI, CENPK, CENPL, CENPO, CENPP, CENPQ, CENPR and CENPS. The CENPA-CAD complex interacts with the CENPA-NAC complex, at least composed of CENPA, CENPC, CENPH, CENPM, CENPN, CENPT and CENPU.

Its subcellular location is the nucleus. The protein resides in the chromosome. The protein localises to the centromere. Its function is as follows. Component of the CENPA-CAD (nucleosome distal) complex, a complex recruited to centromeres which is involved in assembly of kinetochore proteins, mitotic progression and chromosome segregation. May be involved in incorporation of newly synthesized CENPA into centromeres via its interaction with the CENPA-NAC complex. This Mus musculus (Mouse) protein is Centromere protein P (Cenpp).